We begin with the raw amino-acid sequence, 205 residues long: Guanylate kinase (205 aa).

The Guanylate kinase-like domain maps to 5–184; it reads GLLIVLSGPS…AVQKIKGIVE (180 aa). 12-19 is an ATP binding site; it reads GPSGVGKG.

The protein belongs to the guanylate kinase family.

The protein localises to the cytoplasm. It carries out the reaction GMP + ATP = GDP + ADP. Essential for recycling GMP and indirectly, cGMP. This is Guanylate kinase from Listeria innocua serovar 6a (strain ATCC BAA-680 / CLIP 11262).